The sequence spans 2157 residues: DExH-box ATP-dependent RNA helicase DExH14 (2157 aa).

The disordered stretch occupies residues 374–394 (KAASNTQSRMPTYGTQVTVQT). Over residues 375 to 394 (AASNTQSRMPTYGTQVTVQT) the composition is skewed to polar residues. A Helicase ATP-binding 1 domain is found at 517–699 (QTVYHTNENI…FLRVNTDTGL (183 aa)). ATP is bound at residue 530–537 (APTGAGKT). The DEVH box motif lies at 641–644 (DEVH). The 199-residue stretch at 734–932 (CYKKVVDSIK…SLKDNLNAEV (199 aa)) folds into the Helicase C-terminal 1 domain. The region spanning 1008–1315 (CTELGRVASH…LHAETYFTIS (308 aa)) is the SEC63 1 domain. Positions 1365-1540 (HVLYHTDNNV…WLGVGEIGLF (176 aa)) constitute a Helicase ATP-binding 2 domain. 1378 to 1385 (APTGSGKT) contributes to the ATP binding site. Residues 1482 to 1485 (DEIH) carry the DEIH box motif. One can recognise a Helicase C-terminal 2 domain in the interval 1571–1780 (NKPAYAAICT…GTIGNKEDAV (210 aa)). Residues 1839–2150 (PTMLGTIASQ…YLGFEQEHSI (312 aa)) enclose the SEC63 2 domain.

This sequence belongs to the DExH box helicase family.

The protein resides in the nucleus. It carries out the reaction ATP + H2O = ADP + phosphate + H(+). Functionally, RNA helicase that plays an essential role in pre-mRNA splicing as component of the U5 snRNP and U4/U6-U5 tri-snRNP complexes. Involved in spliceosome assembly, activation and disassembly. In Arabidopsis thaliana (Mouse-ear cress), this protein is DExH-box ATP-dependent RNA helicase DExH14.